We begin with the raw amino-acid sequence, 182 residues long: Ribulose bisphosphate carboxylase small subunit, chloroplastic (182 aa).

The N-terminal 58 residues, 1–58 (MASSMLSTATVASINRVSPAQATMVAPFTGLKSTPVFPTTRKTNSDITSITSNGGKVQ), are a transit peptide targeting the chloroplast.

The protein belongs to the RuBisCO small chain family. Heterohexadecamer of 8 large and 8 small subunits.

It localises to the plastid. It is found in the chloroplast. Its function is as follows. RuBisCO catalyzes two reactions: the carboxylation of D-ribulose 1,5-bisphosphate, the primary event in carbon dioxide fixation, as well as the oxidative fragmentation of the pentose substrate. Both reactions occur simultaneously and in competition at the same active site. Although the small subunit is not catalytic it is essential for maximal activity. This is Ribulose bisphosphate carboxylase small subunit, chloroplastic from Manihot esculenta (Cassava).